Reading from the N-terminus, the 231-residue chain is tRNA1(Val) (adenine(37)-N6)-methyltransferase (231 aa).

This sequence belongs to the methyltransferase superfamily. tRNA (adenine-N(6)-)-methyltransferase family.

Its subcellular location is the cytoplasm. The enzyme catalyses adenosine(37) in tRNA1(Val) + S-adenosyl-L-methionine = N(6)-methyladenosine(37) in tRNA1(Val) + S-adenosyl-L-homocysteine + H(+). Specifically methylates the adenine in position 37 of tRNA(1)(Val) (anticodon cmo5UAC). This is tRNA1(Val) (adenine(37)-N6)-methyltransferase from Flavobacteriaceae bacterium (strain 3519-10).